The sequence spans 714 residues: Cadherin-13 (714 aa).

Residues 1–22 form the signal peptide; that stretch reads MQPRTPLTLCVLLSQVLLVTSA. Residues 23 to 138 constitute a propeptide that is removed on maturation; sequence DDLECTPGFQ…RTSPVPRQKR (116 aa). 5 Cadherin domains span residues 143 to 245, 246 to 363, 364 to 477, 478 to 585, and 586 to 680; these read SPIL…RPIF, REGP…SPKF, TKKE…GPVF, YPDP…APVI, and YPTV…VQVC. A disordered region spans residues 156–183; it reads PRDVGKVVDSDRPEGSKFRLTGKGVDQD. The segment covering 158-172 has biased composition (basic and acidic residues); sequence DVGKVVDSDRPEGSK. 7 N-linked (GlcNAc...) asparagine glycosylation sites follow: Asn-382, Asn-489, Asn-500, Asn-530, Asn-598, Asn-638, and Asn-671. Gly-693 carries the GPI-anchor amidated glycine lipid modification. A propeptide spans 694 to 714 (removed in mature form); it reads ALHLSLSLLLLFSLLSLLSGL.

By contrast to classical cadherins, homodimerization in trans is not mediated by cadherin EC1 domain strand-swapping, but instead through a homophilic adhesive interface which joins two elongated EC1-EC2 domains through a region near their Ca2+-binding sites to form a tetrahedral, X-like shape.

Its subcellular location is the cell membrane. It localises to the cytoplasm. In terms of biological role, cadherins are calcium-dependent cell adhesion proteins. They preferentially interact with themselves in a homophilic manner in connecting cells; cadherins may thus contribute to the sorting of heterogeneous cell types. May act as a negative regulator of neural cell growth. This chain is Cadherin-13 (Cdh13), found in Mus musculus (Mouse).